A 135-amino-acid chain; its full sequence is Peptide methionine sulfoxide reductase MsrB (135 aa).

The MsrB domain maps to 9–131; it reads DDYWRSKLTD…NSASIQFEEE (123 aa). Zn(2+)-binding residues include Cys48, Cys51, Cys97, and Cys100. Cys120 acts as the Nucleophile in catalysis.

It belongs to the MsrB Met sulfoxide reductase family. The cofactor is Zn(2+).

It catalyses the reaction L-methionyl-[protein] + [thioredoxin]-disulfide + H2O = L-methionyl-(R)-S-oxide-[protein] + [thioredoxin]-dithiol. This is Peptide methionine sulfoxide reductase MsrB from Teredinibacter turnerae (strain ATCC 39867 / T7901).